The primary structure comprises 470 residues: E3 SUMO-protein ligase EGR2 (470 aa).

Positions 126–141 (PPASTTASSSVTSASP) are enriched in low complexity. Disordered regions lie at residues 126–153 (PPAS…GVCT), 159–178 (PELD…SGCT), and 185–210 (PSAF…SYPS). A compositionally biased stretch (low complexity) spans 190 to 202 (SPPSTTSTSSLAY). An N6-acetyllysine; by EP300 modification is found at K247. Over residues 275 to 291 (GPGAGVTGPGASGGGEG) the composition is skewed to gly residues. The segment at 275 to 345 (GPGAGVTGPG…PYPCPAEGCD (71 aa)) is disordered. C2H2-type zinc fingers lie at residues 337 to 361 (YPCP…IRIH), 367 to 389 (FQCR…IRTH), and 395 to 417 (FACD…TKIH). A disordered region spans residues 408-470 (DERKRHTKIH…ASCTSRTRTP (63 aa)). A compositionally biased stretch (basic residues) spans 412–422 (RHTKIHLRQKE). Residues 426–439 (SAPSAPPSAQSSAS) are compositionally biased toward low complexity. The segment covering 440-450 (GPGGSQAGGSL) has biased composition (gly residues).

This sequence belongs to the EGR C2H2-type zinc-finger protein family. As to quaternary structure, interacts with HCFC1. Interacts with WWP2. Interacts with UBC9. Interacts with CITED1. Interacts (via phosphorylated form) with SFN. Post-translationally, ubiquitinated by WWP2 leading to proteasomal degradation. In terms of processing, acetylated at Lys-247. May be deacetylated by HDAC6, HDAC10 or SIRT1. Expressed mainly in the thymus.

Its subcellular location is the nucleus. It functions in the pathway protein modification; protein sumoylation. In terms of biological role, sequence-specific DNA-binding transcription factor. Plays a role in hindbrain segmentation by regulating the expression of a subset of homeobox containing genes and in Schwann cell myelination by regulating the expression of genes involved in the formation and maintenance of myelin. Binds to two EGR2-consensus sites EGR2A (5'-CTGTAGGAG-3') and EGR2B (5'-ATGTAGGTG-3') in the HOXB3 enhancer and promotes HOXB3 transcriptional activation. Binds to specific DNA sites located in the promoter region of HOXA4, HOXB2 and ERBB2. Regulates hindbrain segmentation by controlling the expression of Hox genes, such as HOXA4, HOXB3 and HOXB2, and thereby specifying odd and even rhombomeres. Promotes the expression of HOXB3 in the rhombomere r5 and of HOXB3 in r3 and r5 in the hindbrain. Regulates myelination in the peripheral nervous system after birth, possibly by regulating the expression of myelin proteins, such as MPZ, and by promoting the differentiation of Schwann cells. Involved in the development of the jaw openener musculature, probably by playing a role in its innervation through trigeminal motor neurons. May play a role in adipogenesis, possibly by regulating the expression of CEBPB. Functionally, E3 SUMO-protein ligase helping SUMO1 conjugation to its coregulators NAB1 and NAB2, whose sumoylation down-regulates EGR2 transcriptional activity. This chain is E3 SUMO-protein ligase EGR2 (Egr2), found in Mus musculus (Mouse).